The following is a 516-amino-acid chain: Solute carrier family 49 member A3 (516 aa).

A compositionally biased stretch (basic and acidic residues) spans 1 to 10 (MAGTMDRLED). Residues 1–22 (MAGTMDRLEDCNSPETSGTAGD) are disordered. The next 12 membrane-spanning stretches (helical) occupy residues 34–54 (WVFLLVVSLLSCSNAMLWLSF), 74–94 (WLSLIYFVLSIPFGMAAIWVL), 104–124 (ILGAWLNFSGSVLRAVPCLPV), 139–159 (LCALAQTLVVSSPAKLAALWF), 170–190 (ISTMSNPLGLLIANVLSPALV), 199–219 (MLGIYIGPAALACLLATVCLW), 253–273 (VLLAVCFGGGIGVFSSFSALL), 289–309 (LCGALFIVFGILGALLLGLYV), 321–341 (IGLCLTSMTSVAFALVSQLQG), 344–364 (LALAAICSLFGLFGFSVAPVV), 382–402 (GLIFVLGQAEGMLIMLLLTAL), and 425–445 (VSLLLLAGLCTLFTCVLVIFF). Residues 453–516 (EAESGGSSSP…EWAETMPRDV (64 aa)) are disordered. Residues 504 to 516 (GHSEWAETMPRDV) are compositionally biased toward basic and acidic residues.

Belongs to the major facilitator superfamily.

Its subcellular location is the membrane. This is Solute carrier family 49 member A3 (Slc49a3) from Mus musculus (Mouse).